Here is a 473-residue protein sequence, read N- to C-terminus: Glutamate--tRNA ligase 1 (473 aa).

A 'HIGH' region motif is present at residues P11–G21. The interval R111 to E132 is disordered. A 'KMSKS' region motif is present at residues K240 to R244. K243 provides a ligand contact to ATP.

This sequence belongs to the class-I aminoacyl-tRNA synthetase family. Glutamate--tRNA ligase type 1 subfamily. Monomer.

Its subcellular location is the cytoplasm. The enzyme catalyses tRNA(Glu) + L-glutamate + ATP = L-glutamyl-tRNA(Glu) + AMP + diphosphate. Functionally, catalyzes the attachment of glutamate to tRNA(Glu) in a two-step reaction: glutamate is first activated by ATP to form Glu-AMP and then transferred to the acceptor end of tRNA(Glu). The chain is Glutamate--tRNA ligase 1 from Beijerinckia indica subsp. indica (strain ATCC 9039 / DSM 1715 / NCIMB 8712).